A 153-amino-acid polypeptide reads, in one-letter code: Ribosome maturation factor RimP (153 aa).

This sequence belongs to the RimP family.

It is found in the cytoplasm. Required for maturation of 30S ribosomal subunits. The sequence is that of Ribosome maturation factor RimP from Coxiella burnetii (strain CbuG_Q212) (Coxiella burnetii (strain Q212)).